The following is a 408-amino-acid chain: Lipoate--protein ligase 1 (408 aa).

A mitochondrion-targeting transit peptide spans Met-1–Arg-18. The BPL/LPL catalytic domain maps to Lys-60 to Tyr-242. Residues Arg-102, Gly-107, and Tyr-110 each contribute to the ATP site. Gly-107 lines the (R)-lipoate pocket. Asp-153 is a binding site for Mg(2+). Lys-160 serves as a coordination point for ATP. (R)-lipoate is bound at residue Lys-160.

This sequence belongs to the LplA family.

It is found in the mitochondrion. It catalyses the reaction L-lysyl-[lipoyl-carrier protein] + (R)-lipoate + ATP = N(6)-[(R)-lipoyl]-L-lysyl-[lipoyl-carrier protein] + AMP + diphosphate + H(+). The enzyme catalyses (R)-dihydrolipoate + L-lysyl-[lipoyl-carrier protein] + ATP = N(6)-[(R)-dihydrolipoyl]-L-lysyl-[lipoyl-carrier protein] + AMP + diphosphate + H(+). It carries out the reaction (R)-dihydrolipoate + ATP + H(+) = N(6)-[(R)-dihydrolipoyl]-5'-AMP + diphosphate. The catalysed reaction is N(6)-[(R)-dihydrolipoyl]-5'-AMP + L-lysyl-[lipoyl-carrier protein] = N(6)-[(R)-dihydrolipoyl]-L-lysyl-[lipoyl-carrier protein] + AMP + 2 H(+). The protein operates within protein modification; protein lipoylation via exogenous pathway; protein N(6)-(lipoyl)lysine from lipoate: step 1/2. It functions in the pathway protein modification; protein lipoylation via exogenous pathway; protein N(6)-(lipoyl)lysine from lipoate: step 2/2. Its activity is regulated as follows. Inhibited by the lipoate analog 8-bromo-octanoate (BrO). Catalytic activity is increased in the presence of Mg(2+). In terms of biological role, catalyzes both the ATP-dependent activation of exogenously supplied lipoate to lipoyl-AMP and the transfer of the activated lipoyl onto the lipoyl domains of lipoate-dependent enzymes. In the mitochondrion, functions as a redox switch between two lipoylation routes. Senses the oxidation state of lipoate and determines which downstream enzymes will be lipoylated. In low reducing conditions, uses lipoate in its oxidized ring form to lipoylate glycine cleavage system H-protein GCVH. In high reducing conditions and together with LipL2, uses reduced lipoate (dihydrolipoate) to lipoylate the E2 component of the branched chain alpha-ketoacid dehydrogenase complex BCKDH-E2/BCDH and the E2 component of the alpha-ketoglutarate dehydrogenase complex KDH. LipL1 is responsible for catalysing the activation of lipoate, forming lipoyl-AMP while LipL2 is required but is not capable of catalyzing this reaction. The sequence is that of Lipoate--protein ligase 1 from Plasmodium falciparum (isolate 3D7).